The sequence spans 115 residues: Holo-[acyl-carrier-protein] synthase (115 aa).

Mg(2+) is bound by residues D6 and E51.

The protein belongs to the P-Pant transferase superfamily. AcpS family. Mg(2+) is required as a cofactor.

The protein resides in the cytoplasm. It catalyses the reaction apo-[ACP] + CoA = holo-[ACP] + adenosine 3',5'-bisphosphate + H(+). Its function is as follows. Transfers the 4'-phosphopantetheine moiety from coenzyme A to a Ser of acyl-carrier-protein. This Campylobacter jejuni subsp. jejuni serotype O:6 (strain 81116 / NCTC 11828) protein is Holo-[acyl-carrier-protein] synthase.